The primary structure comprises 801 residues: Xaa-Pro dipeptidyl-peptidase (801 aa).

Residues Ser-371, Asp-491, and His-522 each act as charge relay system in the active site.

It belongs to the peptidase S15 family. As to quaternary structure, homodimer.

It localises to the cytoplasm. It carries out the reaction Hydrolyzes Xaa-Pro-|- bonds to release unblocked, N-terminal dipeptides from substrates including Ala-Pro-|-p-nitroanilide and (sequentially) Tyr-Pro-|-Phe-Pro-|-Gly-Pro-|-Ile.. Its function is as follows. Removes N-terminal dipeptides sequentially from polypeptides having unsubstituted N-termini provided that the penultimate residue is proline. The sequence is that of Xaa-Pro dipeptidyl-peptidase from Ligilactobacillus salivarius (strain UCC118) (Lactobacillus salivarius).